The sequence spans 80 residues: Small ribosomal subunit protein bS21 (80 aa).

It belongs to the bacterial ribosomal protein bS21 family.

This is Small ribosomal subunit protein bS21 from Rhodospirillum rubrum (strain ATCC 11170 / ATH 1.1.1 / DSM 467 / LMG 4362 / NCIMB 8255 / S1).